The primary structure comprises 499 residues: Probable cytosol aminopeptidase (499 aa).

Residues Lys269 and Asp274 each contribute to the Mn(2+) site. Lys281 is an active-site residue. 3 residues coordinate Mn(2+): Asp292, Asp351, and Glu353. Arg355 is a catalytic residue.

This sequence belongs to the peptidase M17 family. It depends on Mn(2+) as a cofactor.

The protein resides in the cytoplasm. The catalysed reaction is Release of an N-terminal amino acid, Xaa-|-Yaa-, in which Xaa is preferably Leu, but may be other amino acids including Pro although not Arg or Lys, and Yaa may be Pro. Amino acid amides and methyl esters are also readily hydrolyzed, but rates on arylamides are exceedingly low.. It catalyses the reaction Release of an N-terminal amino acid, preferentially leucine, but not glutamic or aspartic acids.. Functionally, presumably involved in the processing and regular turnover of intracellular proteins. Catalyzes the removal of unsubstituted N-terminal amino acids from various peptides. The chain is Probable cytosol aminopeptidase from Actinobacillus pleuropneumoniae serotype 7 (strain AP76).